The sequence spans 218 residues: 3-phospho-D-glycerate guanylyltransferase (218 aa).

This sequence belongs to the CofC family.

The catalysed reaction is (2R)-3-phosphoglycerate + GTP + H(+) = 3-[(R)-glyceryl]-diphospho-5'-guanosine + diphosphate. The protein operates within cofactor biosynthesis; coenzyme F420 biosynthesis. Guanylyltransferase that catalyzes the activation of (2R)-3-phosphoglycerate (3PG) as 3-[(R)-glyceryl]-diphospho-5'-guanosine, via the condensation of 3PG with GTP. It is involved in the biosynthesis of a derivative of the hydride carrier cofactor coenzyme F420, 3PG-F420. In Phenylobacterium zucineum (strain HLK1), this protein is 3-phospho-D-glycerate guanylyltransferase.